Here is a 399-residue protein sequence, read N- to C-terminus: MAKVTFVRTKPHMNVGTIGQIDHGKTTLTAAITKYCSFFGWADYTPYEMIDKAPEERARGITINITHVEYQTEKRHYAHIDCPGHADYIKNMITGAAQMDGAILVLAATDGPMPQTREHVLLARQVNVPAMIVFINKVDMVDPELVDLVEMEVRDLLSKYEFPGDEVPVVRGSALKAIEAPNDPNDPAYKPIKELLDAMDTYFPDPVREVDKPFLMPIEDVFSITGRGTVVTGRIERGVIKPGVEAEIIGMSYEIKKTVITSVEMFRKELDEAIAGDNVGCLLRGSSKDEVERGQVLAKPGSITPLKKFKANIYVLKKEEGGRHTPFTKGYKPQFYIRTADVTGEIVDLPAGVEMVMPGDNVEMTIELIYPVAIEKGMRFAVREGGRTVGAGVVSEIIE.

Residues 10 to 207 (KPHMNVGTIG…AMDTYFPDPV (198 aa)) enclose the tr-type G domain. A G1 region spans residues 19–26 (GQIDHGKT). 19–26 (GQIDHGKT) is a binding site for GTP. Thr-26 provides a ligand contact to Mg(2+). Residues 60-64 (GITIN) are G2. Residues 81 to 84 (DCPG) are G3. Residues 81-85 (DCPGH) and 136-139 (NKVD) contribute to the GTP site. The segment at 136-139 (NKVD) is G4. The tract at residues 173-175 (SAL) is G5.

It belongs to the TRAFAC class translation factor GTPase superfamily. Classic translation factor GTPase family. EF-Tu/EF-1A subfamily. Monomer.

It localises to the cytoplasm. The catalysed reaction is GTP + H2O = GDP + phosphate + H(+). Functionally, GTP hydrolase that promotes the GTP-dependent binding of aminoacyl-tRNA to the A-site of ribosomes during protein biosynthesis. The protein is Elongation factor Tu of Fervidobacterium islandicum.